A 200-amino-acid chain; its full sequence is Putative NAD(P)H nitroreductase Spy0809 (200 aa).

It depends on FMN as a cofactor.

The sequence is that of Putative NAD(P)H nitroreductase Spy0809 from Streptococcus pyogenes serotype M6 (strain ATCC BAA-946 / MGAS10394).